Consider the following 86-residue polypeptide: MAQKKGGGSTRNGRDSESKRLGVKVFGGQAINAGGIIVRQRGTRVHAGDNVGVGKDHTLFALIDGHVQFAVKGPAKKQQVSVVPAA.

Positions 1-10 (MAQKKGGGST) are enriched in gly residues. The interval 1–21 (MAQKKGGGSTRNGRDSESKRL) is disordered.

Belongs to the bacterial ribosomal protein bL27 family.

The chain is Large ribosomal subunit protein bL27 from Cupriavidus taiwanensis (strain DSM 17343 / BCRC 17206 / CCUG 44338 / CIP 107171 / LMG 19424 / R1) (Ralstonia taiwanensis (strain LMG 19424)).